Here is a 369-residue protein sequence, read N- to C-terminus: MADSAQVPTLVYLVTGGCGFLGEHIVRMLLEREPRLRELRVFDLHLSSWLEELKAGPVQVTAIQGDVTQAHEVAAAMSGSHVVIHTAGLVDVFGKASPKTIHKVNVQGTQNVIDACVQTGTQYLVYTSSMEVVGPNIKGHPFYRGNEDTPYEAVHSHPYPCSKALAEQLVLEANGRKVNGGLPLVTCALRPTGIYGEGHQVMRDFYYQGLRFGGRLFRAVPASVEHGRVYVGNVAWMHILVARELEQRAALMGGQVYFCYDKSPYKSYEDFNMEFLSPCGLRLIGAHPLLPYWLLVLLATLNALLQWLLRPLVLYTPLLNPYTLAMANTTFTVSTNKAQRHFGYKPLFSWEESRTRTIQWVQAMEGSAR.

The Proton acceptor role is filled by Tyr-159. Residue Lys-163 coordinates NAD(+). Transmembrane regions (helical) follow at residues 289–309 and 312–334; these read LLPY…QWLL and LVLY…FTVS.

This sequence belongs to the 3-beta-HSD family. As to expression, predominantly expressed in liver.

The protein resides in the endoplasmic reticulum membrane. It catalyses the reaction 7alpha-hydroxycholesterol + NAD(+) = 7alpha-hydroxycholest-4-en-3-one + NADH + H(+). The enzyme catalyses 7alpha,25-dihydroxycholesterol + NAD(+) = 7alpha,25-dihydroxy-4-cholesten-3-one + NADH + H(+). The catalysed reaction is (25R)-cholest-5-en-3beta,7alpha,26-triol + NAD(+) = (25R)-7alpha,26-dihydroxycholest-4-en-3-one + NADH + H(+). It carries out the reaction (24S)-7alpha-dihydroxycholesterol + NAD(+) = (24S)-7alpha,24-dihydroxycholest-4-en-3-one + NADH + H(+). The protein operates within lipid metabolism; steroid biosynthesis. Functionally, the 3-beta-HSD enzymatic system plays a crucial role in the biosynthesis of all classes of hormonal steroids. HSD VII is active against four 7-alpha-hydroxylated sterols. Does not metabolize several different C(19/21) steroids as substrates. Involved in bile acid synthesis. Plays a key role in cell positioning and movement in lymphoid tissues by mediating degradation of 7-alpha,25-dihydroxycholesterol (7-alpha,25-OHC): 7-alpha,25-OHC acts as a ligand for the G protein-coupled receptor GPR183/EBI2, a chemotactic receptor for a number of lymphoid cells. The polypeptide is 3 beta-hydroxysteroid dehydrogenase type 7 (Mus musculus (Mouse)).